The sequence spans 458 residues: F-box/WD repeat-containing protein 9 (458 aa).

An N-acetylmethionine modification is found at methionine 1. 2 disordered regions span residues 1-30 (MELP…DAQA) and 42-64 (KSGL…SASE). Acidic residues predominate over residues 16–26 (DDSDPESETDP). Phosphoserine is present on serine 18. Threonine 55 is modified (phosphothreonine). Serine 59 is modified (phosphoserine). An F-box domain is found at 76–123 (EPGLLSLPPELLLEICSYLDARLVLHVLSRVCHALRDLVSDHVTWRLR). WD repeat units lie at residues 171 to 210 (GHVA…TESN), 220 to 261 (KRNS…QQFG), 264 to 301 (KASS…ALLK), 305 to 342 (LHSR…VLQR), 344 to 381 (QLDS…FQLI), 387 to 424 (GHSF…RTIC), and 427 to 458 (RHDN…RLQA).

As to quaternary structure, interacts with SKP1 and CUL1.

Its function is as follows. Substrate-recognition component of the SCF (SKP1-CUL1-F-box protein)-type E3 ubiquitin ligase complex. The sequence is that of F-box/WD repeat-containing protein 9 (FBXW9) from Homo sapiens (Human).